A 425-amino-acid polypeptide reads, in one-letter code: Synaptotagmin-4 (425 aa).

Residues 1–16 (MAPITTSREEFDEIPT) lie on the Vesicular side of the membrane. The chain crosses the membrane as a helical span at residues 17–37 (VVGIFSAFGLVFTVSLFAWIC). At 38–425 (CQRKSSKSNK…IAKWHVLCDG (388 aa)) the chain is on the cytoplasmic side. A compositionally biased stretch (basic and acidic residues) spans 73-83 (FGADDKNEVKN). Disordered regions lie at residues 73-93 (FGAD…NSLH) and 127-147 (LEGE…SLTS). Residue S135 is modified to Phosphoserine; by MAPK8. Residues 135–146 (SPESLKSSTSLT) are compositionally biased toward low complexity. C2 domains lie at 153–274 (KLGT…MLMN) and 287–420 (GRGE…AKWH). Positions 246, 249, and 252 each coordinate Ca(2+).

It belongs to the synaptotagmin family. In terms of assembly, interacts with KIF1A; the interaction increases in presence of calcium and decreases when SYT4 is phosphorylated at Ser-135. The cofactor is Ca(2+). In terms of processing, phosphorylation at Ser-135 by MAPK8/JNK1 reduces interaction with KIF1A and neuronal dense core vesicles mobility. Expressed in melanocytes. Expressed in brain. Within brain, expression is highest in hippocampus, with substantial levels also detected in amygdala and thalamus.

It localises to the cytoplasmic vesicle. The protein localises to the secretory vesicle. Its subcellular location is the neuronal dense core vesicle membrane. Functionally, synaptotagmin family member which does not bind Ca(2+). Involved in neuronal dense core vesicles (DCVs) mobility through its interaction with KIF1A. Upon increased neuronal activity, phosphorylation by MAPK8/JNK1 destabilizes the interaction with KIF1A and captures DCVs to synapses. Plays a role in dendrite formation by melanocytes. In Homo sapiens (Human), this protein is Synaptotagmin-4 (SYT4).